A 247-amino-acid polypeptide reads, in one-letter code: Protein IRON-RELATED TRANSCRIPTION FACTOR 2 (247 aa).

The Nuclear localization signal signature appears at 68-75 (HRKLSHNA). Residues 68 to 81 (HRKLSHNAYERDRR) form a basic motif region. Residues 68–119 (HRKLSHNAYERDRRKQLNELYSSLRALLPDADHTKLSIPTTVSRVLKYIPEL) enclose the bHLH domain. Positions 82-119 (KQLNELYSSLRALLPDADHTKLSIPTTVSRVLKYIPEL) are helix-loop-helix motif.

This sequence belongs to the bHLH protein family. As to quaternary structure, forms homodimers. Interacts with BHLH156 in the nucleus. In terms of tissue distribution, expressed constitutively at low levels in the roots. Also observed in flowers, developing seeds, embryos and vascular bundles.

Its subcellular location is the nucleus. The protein localises to the cytoplasm. In terms of biological role, transcription activator that binds to the DNA motif 5'-CACGTGG-3' in the promoter of iron (Fe) deficiency-inducible genes as well as of genes involved in iron homeostasis, thus contributing to basal tolerance to iron deficiency, iron uptake from soil and iron transport, particularly during seed maturation and germination. Promotes the accumulation of mugineic acid family phytosiderophores (MAs). Required for ethylene-mediated signaling during iron deficiency responses. Improves growth and yield, especially in calcareous soil with low iron availability. Promotes iron concentration in shoots and grain. The protein is Protein IRON-RELATED TRANSCRIPTION FACTOR 2 of Oryza sativa subsp. japonica (Rice).